The chain runs to 704 residues: Protein polyglycylase TTLL10 (704 aa).

Disordered regions lie at residues 1–32, 46–125, and 137–170; these read MALH…LPSP, GHRA…SVKE, and DADD…PGQG. Over residues 93-105 the composition is skewed to basic residues; sequence VSSKRSKRSRIHP. Residues 114-125 are compositionally biased toward basic and acidic residues; it reads THEKQMGSSVKE. The TTL domain maps to 169 to 540; that stretch reads QGPFFYIGGT…TCQKSLHSQK (372 aa). Residues K301, 307–308, 350–353, 363–365, and 406–407 each bind ATP; these read QG, QRYV, KFD, and TN. Q307 contributes to the a protein binding site. Positions 486, 499, and 501 each coordinate Mg(2+). The disordered stretch occupies residues 565-704; it reads LASSRPLNRL…EQRSTSHRGS (140 aa). 2 stretches are compositionally biased toward pro residues: residues 576 to 588 and 596 to 612; these read NPNP…ANPH and HPHP…PPRP. Low complexity-rich tracts occupy residues 616–629 and 654–667; these read AASS…AAIS and SDSS…SEPS.

Mg(2+) is required as a cofactor. In terms of tissue distribution, highly expressed in testis. Expressed in brain, heart, kidney, liver, lung, muscle and trachea.

It is found in the cytoplasm. It localises to the cytoskeleton. The protein resides in the cell projection. Its subcellular location is the cilium. The protein localises to the cilium axoneme. The catalysed reaction is (glycyl)(n)-glycyl-L-glutamyl-[protein] + glycine + ATP = (glycyl)(n+1)-glycyl-L-glutamyl-[protein] + ADP + phosphate + H(+). Polyglycylase which modifies both tubulin and non-tubulin proteins, generating polyglycine side chains of variable lengths on the gamma-carboxyl groups of specific glutamate residues of target proteins. Involved in the elongation step rather than the initiation step of the polyglycylation reaction. Polyglycylates alpha-tubulin and beta-tubulin. Polyglycylates non-tubulin proteins such as nucleosome assembly protein NAP1. In Mus musculus (Mouse), this protein is Protein polyglycylase TTLL10.